The chain runs to 124 residues: MDKSVRVFKLRTQTEEQLVGELGKLQTELSQLRIAKIAGGTANKLGRIGIVRKAIAKYLTIINEKRRQAVKDQFKGKSLKPLDIRVKKTRAIRRKLTKKQREAVLVKTQKKLNNFGLRKFALKA.

Belongs to the universal ribosomal protein uL29 family.

The polypeptide is Large ribosomal subunit protein uL29 (RPL35) (Tetrahymena thermophila (strain SB210)).